A 589-amino-acid chain; its full sequence is Muscarinic acetylcholine receptor M3 (589 aa).

Over 1 to 66 (MTLHSNSTTS…DPLGGHTIWQ (66 aa)) the chain is Extracellular. Residues Asn-6, Asn-15, Asn-41, Asn-48, and Asn-52 are each glycosylated (N-linked (GlcNAc...) asparagine). Residues 67 to 90 (VVFIAFLTGFLALVTIIGNILVIV) traverse the membrane as a helical segment. Topologically, residues 91–103 (AFKVNKQLKTVNN) are cytoplasmic. The helical transmembrane segment at 104-129 (YFLLSLACADLIIGVISMNLFTTYII) threads the bilayer. Residues 130–141 (MNRWALGNLACD) are Extracellular-facing. Cys-140 and Cys-220 are disulfide-bonded. A helical membrane pass occupies residues 142 to 163 (LWLSIDYVASNASVMNLLVISF). At 164–183 (DRYFSITRPLTYRAKRTTKR) the chain is on the cytoplasmic side. Residues 184–205 (AGVMIGLAWVISFVLWAPAILF) form a helical membrane-spanning segment. Topologically, residues 206–228 (WQYFVGKRTVPPGECFIQFLSEP) are extracellular. A helical membrane pass occupies residues 229 to 251 (TITFGTAIAAFYMPVTIMTILYW). Over 252-490 (RIYKETEKRT…SLIKEKKAAQ (239 aa)) the chain is Cytoplasmic. Residues 274–280 (AEAENFV) carry the Basolateral sorting signal motif. 2 disordered regions span residues 275–295 (EAEN…YELQ) and 323–356 (AEQM…EEDI). Residues 283-295 (TGSSRSCSSYELQ) are compositionally biased toward polar residues. The segment covering 333 to 344 (SDSWNNNDAAAS) has biased composition (low complexity). Residue Ser-384 is modified to Phosphoserine. Residues 491-513 (TLSAILLAFIITWTPYNIMVLVN) form a helical membrane-spanning segment. Topologically, residues 514–525 (TFCDSCIPKTYW) are extracellular. An intrachain disulfide couples Cys-516 to Cys-519. The chain crosses the membrane as a helical span at residues 526-545 (NLGYWLCYINSTVNPVCYAL). The Cytoplasmic segment spans residues 546 to 589 (CNKTFRTTFKMLLLCQCDKRKRRKQQYQQRQSVIFHKRVPEQAL).

Belongs to the G-protein coupled receptor 1 family. Muscarinic acetylcholine receptor subfamily. CHRM3 sub-subfamily. Homodimer; the dimers can form tetramers. Interacts with NALCN. Interacts with TMEM147. As to expression, expressed in cerebral cortex, submandibular gland, hypothalamus, pancreas, liver, and ileum.

The protein resides in the cell membrane. The protein localises to the postsynaptic cell membrane. It is found in the basolateral cell membrane. It localises to the endoplasmic reticulum membrane. The muscarinic acetylcholine receptor mediates various cellular responses, including inhibition of adenylate cyclase, breakdown of phosphoinositides and modulation of potassium channels through the action of G proteins. Primary transducing effect is Pi turnover. This chain is Muscarinic acetylcholine receptor M3 (Chrm3), found in Mus musculus (Mouse).